A 105-amino-acid chain; its full sequence is Large ribosomal subunit protein uL24 (105 aa).

This sequence belongs to the universal ribosomal protein uL24 family. In terms of assembly, part of the 50S ribosomal subunit.

In terms of biological role, one of two assembly initiator proteins, it binds directly to the 5'-end of the 23S rRNA, where it nucleates assembly of the 50S subunit. Functionally, one of the proteins that surrounds the polypeptide exit tunnel on the outside of the subunit. The chain is Large ribosomal subunit protein uL24 from Aliivibrio salmonicida (strain LFI1238) (Vibrio salmonicida (strain LFI1238)).